Reading from the N-terminus, the 357-residue chain is 3-isopropylmalate dehydrogenase (357 aa).

Position 76–89 (76–89 (GPKWDNEPSHNRPE)) interacts with NAD(+). Positions 96, 106, 135, and 223 each coordinate substrate. Residues D223, D247, and D251 each coordinate Mg(2+). 281–293 (GSAPDIAGQDKAN) lines the NAD(+) pocket.

Belongs to the isocitrate and isopropylmalate dehydrogenases family. LeuB type 1 subfamily. Homodimer. The cofactor is Mg(2+). Mn(2+) serves as cofactor.

It is found in the cytoplasm. It catalyses the reaction (2R,3S)-3-isopropylmalate + NAD(+) = 4-methyl-2-oxopentanoate + CO2 + NADH. Its pathway is amino-acid biosynthesis; L-leucine biosynthesis; L-leucine from 3-methyl-2-oxobutanoate: step 3/4. Catalyzes the oxidation of 3-carboxy-2-hydroxy-4-methylpentanoate (3-isopropylmalate) to 3-carboxy-4-methyl-2-oxopentanoate. The product decarboxylates to 4-methyl-2 oxopentanoate. This chain is 3-isopropylmalate dehydrogenase, found in Helicobacter hepaticus (strain ATCC 51449 / 3B1).